A 98-amino-acid polypeptide reads, in one-letter code: Defensin (98 aa).

The N-terminal stretch at 1 to 19 (MRTFLVTFVLVVVVGVISA) is a signal peptide. A propeptide spanning residues 20–58 (YPSNPVEVEAEDFDAQDPDLQTFQDTFYEVPQVHSRQKR) is cleaved from the precursor. Disulfide bonds link cysteine 61/cysteine 88, cysteine 74/cysteine 94, and cysteine 78/cysteine 96.

As to expression, is synthesized by the fat body and eventually secreted into the hemolymph.

It is found in the secreted. Functionally, has antiparasitic activity against promastigote forms of L.major, and antibacterial activity against Gram-positive bacterium S.aureus. Has antifungal activity against the yeasts C.albicans and S.cerevisiae, but not C.glabrata. Has antifungal activity against filamentous fungi A.fumigatus, F.culmorum, F.oxysporum, N.crassa, T.viride and T.mentagrophytes, but not B.bassiana. In Phlebotomus duboscqi (Sandfly), this protein is Defensin.